Reading from the N-terminus, the 103-residue chain is Co-chaperonin GroES (103 aa).

This sequence belongs to the GroES chaperonin family. Heptamer of 7 subunits arranged in a ring. Interacts with the chaperonin GroEL.

It localises to the cytoplasm. In terms of biological role, together with the chaperonin GroEL, plays an essential role in assisting protein folding. The GroEL-GroES system forms a nano-cage that allows encapsulation of the non-native substrate proteins and provides a physical environment optimized to promote and accelerate protein folding. GroES binds to the apical surface of the GroEL ring, thereby capping the opening of the GroEL channel. The chain is Co-chaperonin GroES from Rippkaea orientalis (strain PCC 8801 / RF-1) (Cyanothece sp. (strain PCC 8801)).